Consider the following 751-residue polypeptide: E3 ubiquitin-protein ligase SMURF2 (751 aa).

The region spanning 1–119 is the C2 domain; sequence MSNQGSRRNG…TGYQRLDLCK (119 aa). The WW 1 domain maps to 157–190; that stretch reads NDLPDGWEERRTASGRIQYLNHITRTTQWERPTR. The span at 214-226 shows a compositional bias: polar residues; sequence GTNGASCGQTSDP. The interval 214-236 is disordered; sequence GTNGASCGQTSDPRISERRVRSQ. WW domains lie at 251–284 and 297–330; these read PDLP…DPRV and GPLP…DPRL. An HECT domain is found at 417 to 751; the sequence is RPKDLWKRLM…IEETCGFAVE (335 aa). The Glycyl thioester intermediate role is filled by Cys-719.

The protein localises to the nucleus. The protein resides in the cytoplasm. It localises to the cell membrane. It is found in the membrane raft. It carries out the reaction S-ubiquitinyl-[E2 ubiquitin-conjugating enzyme]-L-cysteine + [acceptor protein]-L-lysine = [E2 ubiquitin-conjugating enzyme]-L-cysteine + N(6)-ubiquitinyl-[acceptor protein]-L-lysine.. Its pathway is protein modification; protein ubiquitination. In terms of biological role, E3 ubiquitin-protein ligase which accepts ubiquitin from an E2 ubiquitin-conjugating enzyme in the form of a thioester and then directly transfers the ubiquitin to targeted substrates. The chain is E3 ubiquitin-protein ligase SMURF2 (smurf2) from Xenopus laevis (African clawed frog).